The primary structure comprises 147 residues: Protein LOL1 (147 aa).

Residues 1–38 (MVASRAPRSESPWLKKPMHGVSGSTAMASTPWSSMPPS) form a disordered region. The segment covering 22–38 (SGSTAMASTPWSSMPPS) has biased composition (polar residues). The segment at 47 to 77 (QLVCSGCRNLLMYPAGATSICCAVCGTVTAV) is putative zinc finger.

The protein resides in the nucleus. Putative zinc finger that may be involved in programmed cell death and defense response. This Oryza sativa subsp. japonica (Rice) protein is Protein LOL1 (LOL1).